Reading from the N-terminus, the 566-residue chain is Amino acid transporter 6-1 (566 aa).

11 helical membrane passes run 65-85 (YVLL…FYGW), 137-157 (MTFA…DWLG), 158-178 (PLWT…FLAF), 187-207 (YPAL…TLCI), 216-236 (GLII…PLVL), 250-270 (VSIG…LLFM), 334-354 (FFSI…WATS), 367-387 (DVVS…ILLG), 392-412 (VVGI…TYVF), 423-443 (LSAC…YVYV), and 455-475 (LIGI…PLYE). Residue asparagine 476 is glycosylated (N-linked (GlcNAc...) asparagine). Residues 489 to 509 (IQIAMTALLCVQYVWIFILGF) traverse the membrane as a helical segment.

This sequence belongs to the SLC43A transporter (TC 2.A.1.44) family.

It localises to the cell membrane. It carries out the reaction L-lysine(in) = L-lysine(out). It catalyses the reaction L-arginine(in) = L-arginine(out). The enzyme catalyses L-methionine(in) = L-methionine(out). The catalysed reaction is L-leucine(in) = L-leucine(out). Cationic and neutral amino acid transporter. Transports lysine with high affinity. Can transport arginine, methionine and leucine. Does not require inorganic ions, such as sodium, chloride, potassium, calcium or magnesium, for transport activity. The sequence is that of Amino acid transporter 6-1 from Toxoplasma gondii (strain ATCC 50611 / Me49).